A 119-amino-acid polypeptide reads, in one-letter code: Large ribosomal subunit protein uL22c (119 aa).

It belongs to the universal ribosomal protein uL22 family. In terms of assembly, part of the 50S ribosomal subunit.

The protein resides in the plastid. The protein localises to the chloroplast. In terms of biological role, this protein binds specifically to 23S rRNA. The globular domain of the protein is located near the polypeptide exit tunnel on the outside of the subunit, while an extended beta-hairpin is found that lines the wall of the exit tunnel in the center of the 70S ribosome. The sequence is that of Large ribosomal subunit protein uL22c (rpl22) from Spirogyra maxima (Green alga).